Reading from the N-terminus, the 179-residue chain is Phospholipase A2 (179 aa).

Positions 1 to 21 (MHALRSSVLALWLCLHVSVRA) are cleaved as a signal peptide. The propeptide occupies 22-39 (WMTYRSANGLDEYEPEDR). The Ca(2+) site is built by tryptophan 47, glycine 49, and glycine 51. Disulfide bonds link cysteine 48–cysteine 70, cysteine 69–cysteine 109, cysteine 76–cysteine 102, cysteine 100–cysteine 133, and cysteine 142–cysteine 150. The active site involves histidine 73. Aspartate 74 contacts Ca(2+). Residue aspartate 103 is part of the active site.

This sequence belongs to the phospholipase A2 family. Group III subfamily. Ca(2+) serves as cofactor. In terms of tissue distribution, expressed by the venom gland.

Its subcellular location is the secreted. It catalyses the reaction a 1,2-diacyl-sn-glycero-3-phosphocholine + H2O = a 1-acyl-sn-glycero-3-phosphocholine + a fatty acid + H(+). Its function is as follows. May potentiate Xylotoxin(1)-Xa1a DRG activation and cell lysis, since the orthologous A.mellifera PA2 potentiates Xylotoxin(1)-Xa1a DRG activation and cell lysis. In vivo, intraplantar injection in mice may potentiate spontaneous pain behaviors and paw swelling caused by Xylotoxin(1)-Xa1a, since the orthologous A.mellifera PA2 shows this effect. PLA2 catalyzes the calcium-dependent hydrolysis of the 2-acyl groups in 3-sn-phosphoglycerides. In Xylocopa aruana (Great carpenter bee), this protein is Phospholipase A2.